The sequence spans 146 residues: Hemoglobin subunit beta/beta' (146 aa).

Residues 2 to 146 (HWSAEEKQLI…VAHALARKYH (145 aa)) form the Globin domain. Residues histidine 63 and histidine 92 each contribute to the heme b site.

Belongs to the globin family. In terms of assembly, heterotetramer of two alpha chains and two beta chains. In terms of tissue distribution, red blood cells.

Functionally, involved in oxygen transport from the lung to the various peripheral tissues. This is Hemoglobin subunit beta/beta' (HBB) from Chroicocephalus ridibundus (Black-headed gull).